The primary structure comprises 681 residues: Macrolide export ATP-binding/permease protein MacB (681 aa).

Positions 6 to 244 (LKLAAVTRRF…FAEVGVGAAA (239 aa)) constitute an ABC transporter domain. 42–49 (GASGSGKS) contributes to the ATP binding site. The disordered stretch occupies residues 246–274 (TETAADTRSAPASGDAPPPANNDTAADPA). 4 consecutive transmembrane segments (helical) span residues 306–326 (LLTMLGIIIGITSVVSIVAVG), 554–574 (LTLLLSLIAVISLVVGGIGVM), 611–631 (LVCLLGGTIGIALSFGLGALF), and 644–664 (AGAIVTAFVCSTLTGVIFGFM).

This sequence belongs to the ABC transporter superfamily. Macrolide exporter (TC 3.A.1.122) family. Homodimer.

Its subcellular location is the cell inner membrane. Its function is as follows. Non-canonical ABC transporter that contains transmembrane domains (TMD), which form a pore in the inner membrane, and an ATP-binding domain (NBD), which is responsible for energy generation. Confers resistance against macrolides. The polypeptide is Macrolide export ATP-binding/permease protein MacB (Burkholderia cenocepacia (strain HI2424)).